Reading from the N-terminus, the 426-residue chain is Branched-chain amino acid permease BrnQ (426 aa).

The next 12 membrane-spanning stretches (helical) occupy residues 11–31, 41–61, 76–96, 111–131, 140–160, 186–206, 219–239, 268–288, 296–316, 324–344, 358–378, and 390–410; these read LMLF…MLGL, ILGF…AVVL, IFGL…YALP, NALY…ALSW, LGKW…VLSV, GYMT…ISAF, VVSA…LGSI, IMFV…LISA, LLPG…SFGV, VLAV…TLVF, TYLF…IPAL, and MSLG…AIDW.

The protein belongs to the branched chain amino acid transporter family.

The protein resides in the cell membrane. Its function is as follows. Branched chain amino acid transport system, which transports isoleucine. This chain is Branched-chain amino acid permease BrnQ, found in Corynebacterium glutamicum (strain ATCC 13032 / DSM 20300 / JCM 1318 / BCRC 11384 / CCUG 27702 / LMG 3730 / NBRC 12168 / NCIMB 10025 / NRRL B-2784 / 534).